Consider the following 276-residue polypeptide: Proteasome subunit beta type-8 (276 aa).

A propeptide spans 1–72 (MALLDLCGAP…RKVQIEMAHG (72 aa)) (removed in mature form). Catalysis depends on T73, which acts as the Nucleophile.

The protein belongs to the peptidase T1B family. As to quaternary structure, the 26S proteasome consists of a 20S proteasome core and two 19S regulatory subunits. The 20S proteasome core is composed of 28 subunits that are arranged in four stacked rings, resulting in a barrel-shaped structure. The two end rings are each formed by seven alpha subunits, and the two central rings are each formed by seven beta subunits. The catalytic chamber with the active sites is on the inside of the barrel. Component of the immunoproteasome, where it displaces the equivalent housekeeping subunit PSMB5. Component of the spermatoproteasome, a form of the proteasome specifically found in testis. Directly interacts with POMP. Interacts with TAP1. Post-translationally, autocleaved. The resulting N-terminal Thr residue of the mature subunit is responsible for the nucleophile proteolytic activity.

The protein localises to the cytoplasm. It localises to the nucleus. It catalyses the reaction Cleavage of peptide bonds with very broad specificity.. In terms of biological role, the proteasome is a multicatalytic proteinase complex which is characterized by its ability to cleave peptides with Arg, Phe, Tyr, Leu, and Glu adjacent to the leaving group at neutral or slightly basic pH. The proteasome has an ATP-dependent proteolytic activity. This subunit is involved in antigen processing to generate class I binding peptides. May participate in the generation of spliced peptides resulting from the ligation of two separate proteasomal cleavage products that are not contiguous in the parental protein. Required for adipocyte differentiation. This Rattus norvegicus (Rat) protein is Proteasome subunit beta type-8 (Psmb8).